The following is a 371-amino-acid chain: tRNA-specific 2-thiouridylase MnmA (371 aa).

ATP is bound by residues 13–20 (GMSGGVDS) and M39. Residues 99–101 (NPD) form an interaction with target base in tRNA region. C104 (nucleophile) is an active-site residue. C104 and C200 are disulfide-bonded. G128 lines the ATP pocket. Positions 150-152 (KDQ) are interaction with tRNA. C200 serves as the catalytic Cysteine persulfide intermediate. The segment at 308–309 (RY) is interaction with tRNA.

Belongs to the MnmA/TRMU family.

The protein localises to the cytoplasm. The enzyme catalyses S-sulfanyl-L-cysteinyl-[protein] + uridine(34) in tRNA + AH2 + ATP = 2-thiouridine(34) in tRNA + L-cysteinyl-[protein] + A + AMP + diphosphate + H(+). Functionally, catalyzes the 2-thiolation of uridine at the wobble position (U34) of tRNA, leading to the formation of s(2)U34. This Bacillus anthracis protein is tRNA-specific 2-thiouridylase MnmA.